We begin with the raw amino-acid sequence, 249 residues long: 5'-nucleotidase SurE (249 aa).

The a divalent metal cation site is built by D8, D9, S39, and N91.

The protein belongs to the SurE nucleotidase family. Requires a divalent metal cation as cofactor.

Its subcellular location is the cytoplasm. The catalysed reaction is a ribonucleoside 5'-phosphate + H2O = a ribonucleoside + phosphate. Functionally, nucleotidase that shows phosphatase activity on nucleoside 5'-monophosphates. The chain is 5'-nucleotidase SurE from Pseudomonas aeruginosa (strain LESB58).